The sequence spans 1013 residues: Alpha-2-macroglobulin homolog (1013 aa).

The segment at 804–844 (AQRGANGERDGLRETVPVRPAGARQLLSGSGSVGADKAGGN) is disordered.

This sequence belongs to the protease inhibitor I39 (alpha-2-macroglobulin) family. Bacterial alpha-2-macroglobulin subfamily.

The sequence is that of Alpha-2-macroglobulin homolog from Deinococcus radiodurans (strain ATCC 13939 / DSM 20539 / JCM 16871 / CCUG 27074 / LMG 4051 / NBRC 15346 / NCIMB 9279 / VKM B-1422 / R1).